The primary structure comprises 403 residues: Phosphopentomutase (403 aa).

Positions 13, 298, 303, 339, 340, and 351 each coordinate Mn(2+).

It belongs to the phosphopentomutase family. Mn(2+) serves as cofactor.

Its subcellular location is the cytoplasm. The enzyme catalyses 2-deoxy-alpha-D-ribose 1-phosphate = 2-deoxy-D-ribose 5-phosphate. It catalyses the reaction alpha-D-ribose 1-phosphate = D-ribose 5-phosphate. Its pathway is carbohydrate degradation; 2-deoxy-D-ribose 1-phosphate degradation; D-glyceraldehyde 3-phosphate and acetaldehyde from 2-deoxy-alpha-D-ribose 1-phosphate: step 1/2. Isomerase that catalyzes the conversion of deoxy-ribose 1-phosphate (dRib-1-P) and ribose 1-phosphate (Rib-1-P) to deoxy-ribose 5-phosphate (dRib-5-P) and ribose 5-phosphate (Rib-5-P), respectively. The protein is Phosphopentomutase of Streptococcus pyogenes serotype M18 (strain MGAS8232).